The following is a 320-amino-acid chain: Cytochrome f (320 aa).

The signal sequence occupies residues 1 to 35 (MQTRNAFSCIKEGITRSISISVMIYIIIRAPFSNA). Residues tyrosine 36, cysteine 56, cysteine 59, and histidine 60 each coordinate heme. Residues 286–306 (VQGLLFFLASIILAQIFLVLK) traverse the membrane as a helical segment.

The protein belongs to the cytochrome f family. The 4 large subunits of the cytochrome b6-f complex are cytochrome b6, subunit IV (17 kDa polypeptide, petD), cytochrome f and the Rieske protein, while the 4 small subunits are PetG, PetL, PetM and PetN. The complex functions as a dimer. Heme is required as a cofactor.

The protein localises to the plastid. Its subcellular location is the chloroplast thylakoid membrane. In terms of biological role, component of the cytochrome b6-f complex, which mediates electron transfer between photosystem II (PSII) and photosystem I (PSI), cyclic electron flow around PSI, and state transitions. The chain is Cytochrome f from Phaseolus vulgaris (Kidney bean).